The following is a 159-amino-acid chain: Galactose-specific lectin nattectin (159 aa).

The first 21 residues, 1 to 21, serve as a signal peptide directing secretion; that stretch reads MASVPHFTVFLFLACALGIGA. A propeptide spanning residues 22 to 24 is cleaved from the precursor; that stretch reads NVT. 3 disulfides stabilise this stretch: C31–C42, C59–C155, and C132–C147. The region spanning 38 to 156 is the C-type lectin domain; that stretch reads HGSRCFTFHR…CKVKRSFLCA (119 aa). Ca(2+) contacts are provided by Q122, D124, E130, and N143. The Galactose-binding motif lies at 122–124; that stretch reads QPD.

In terms of assembly, monomer. In terms of processing, not glycosylated. In terms of tissue distribution, expressed by the venom gland.

The protein resides in the secreted. Galactose specific lectin that exhibits hemagglutination activity (minimum hemagluttination concentration = 2.5 ug/well) in a calcium-independent fashion. Has remarkable pro-inflammatory activity, inducing neutrophil mobilization in mice. Plays a crucial role in the innate immune system and chronic manifestations, especially in neutrophil mobilization. This is Galactose-specific lectin nattectin from Thalassophryne nattereri (Copper Joe toadfish).